We begin with the raw amino-acid sequence, 359 residues long: DNA replication and repair protein RecF (359 aa).

Residue 30–37 (GQNAQGKT) coordinates ATP.

This sequence belongs to the RecF family.

The protein localises to the cytoplasm. In terms of biological role, the RecF protein is involved in DNA metabolism; it is required for DNA replication and normal SOS inducibility. RecF binds preferentially to single-stranded, linear DNA. It also seems to bind ATP. The protein is DNA replication and repair protein RecF of Lactococcus lactis subsp. cremoris (strain SK11).